The sequence spans 139 residues: uncharacterized protein (139 aa).

An HTH cro/C1-type domain is found at 8-63 (LRELRRARKLTVNQLAVYSGISSATISKIENGKRGTPKPATIKKLAAVLKVPYENL). Positions 19-38 (VNQLAVYSGISSATISKIEN) form a DNA-binding region, H-T-H motif.

This is an uncharacterized protein from Bacillus subtilis (strain 168).